The primary structure comprises 96 residues: GLSDGEWQLVLNVWGKVEADLAGHGQEVLIRLFKGHPETLEKFDKFKHLKSEKGSEDLKKHGNTVETALEGILKKKALELFKNDIAAKTKELGFLG.

Residues glycine 1–glycine 96 enclose the Globin domain. Serine 3 carries the post-translational modification Phosphoserine. Nitrite is bound at residue histidine 61. Histidine 61 provides a ligand contact to O2. Threonine 64 is subject to Phosphothreonine.

The protein belongs to the globin family. As to quaternary structure, monomeric.

Its subcellular location is the cytoplasm. The protein localises to the sarcoplasm. It catalyses the reaction Fe(III)-heme b-[protein] + nitric oxide + H2O = Fe(II)-heme b-[protein] + nitrite + 2 H(+). The catalysed reaction is H2O2 + AH2 = A + 2 H2O. Monomeric heme protein which primary function is to store oxygen and facilitate its diffusion within muscle tissues. Reversibly binds oxygen through a pentacoordinated heme iron and enables its timely and efficient release as needed during periods of heightened demand. Depending on the oxidative conditions of tissues and cells, and in addition to its ability to bind oxygen, it also has a nitrite reductase activity whereby it regulates the production of bioactive nitric oxide. Under stress conditions, like hypoxia and anoxia, it also protects cells against reactive oxygen species thanks to its pseudoperoxidase activity. This is Myoglobin (MB) from Ailuropoda melanoleuca (Giant panda).